Consider the following 304-residue polypeptide: Oxygen-dependent coproporphyrinogen-III oxidase (304 aa).

Ser95 is a binding site for substrate. Positions 99 and 109 each coordinate a divalent metal cation. Catalysis depends on His109, which acts as the Proton donor. Substrate is bound at residue 111–113; it reads NVR. Residues His148 and His178 each coordinate a divalent metal cation. Residues 243–278 are important for dimerization; sequence YVEFNLVYDRGTLFGLQSGGRTESILMSLPPLVRWR. Residue 261–263 participates in substrate binding; that stretch reads GGR.

It belongs to the aerobic coproporphyrinogen-III oxidase family. In terms of assembly, homodimer. Requires a divalent metal cation as cofactor.

It localises to the cytoplasm. It catalyses the reaction coproporphyrinogen III + O2 + 2 H(+) = protoporphyrinogen IX + 2 CO2 + 2 H2O. Its pathway is porphyrin-containing compound metabolism; protoporphyrin-IX biosynthesis; protoporphyrinogen-IX from coproporphyrinogen-III (O2 route): step 1/1. Its function is as follows. Involved in the heme biosynthesis. Catalyzes the aerobic oxidative decarboxylation of propionate groups of rings A and B of coproporphyrinogen-III to yield the vinyl groups in protoporphyrinogen-IX. This chain is Oxygen-dependent coproporphyrinogen-III oxidase, found in Thioalkalivibrio sulfidiphilus (strain HL-EbGR7).